The following is a 169-amino-acid chain: Sec-independent protein translocase protein TatB (169 aa).

The chain crosses the membrane as a helical span at residues 1–21 (MFDIGFLELAVIAVIGLIVIG). The tract at residues 98–169 (EAEEAKLQTP…TTKTEPANDR (72 aa)) is disordered. A compositionally biased stretch (basic and acidic residues) spans 134–143 (PPEEPSKVEA). A compositionally biased stretch (polar residues) spans 146–169 (SAETPQANNQDQQPTTKTEPANDR).

Belongs to the TatB family. The Tat system comprises two distinct complexes: a TatABC complex, containing multiple copies of TatA, TatB and TatC subunits, and a separate TatA complex, containing only TatA subunits. Substrates initially bind to the TatABC complex, which probably triggers association of the separate TatA complex to form the active translocon.

Its subcellular location is the cell inner membrane. In terms of biological role, part of the twin-arginine translocation (Tat) system that transports large folded proteins containing a characteristic twin-arginine motif in their signal peptide across membranes. Together with TatC, TatB is part of a receptor directly interacting with Tat signal peptides. TatB may form an oligomeric binding site that transiently accommodates folded Tat precursor proteins before their translocation. The polypeptide is Sec-independent protein translocase protein TatB (Saccharophagus degradans (strain 2-40 / ATCC 43961 / DSM 17024)).